A 411-amino-acid polypeptide reads, in one-letter code: LL-diaminopimelate aminotransferase (411 aa).

Substrate-binding residues include Y15 and G42. Pyridoxal 5'-phosphate is bound by residues Y72, 105–106, Y129, N186, Y217, and 245–247; these read SK and SFS. Substrate is bound by residues K106, Y129, and N186. K248 carries the N6-(pyridoxal phosphate)lysine modification. 2 residues coordinate pyridoxal 5'-phosphate: R256 and N287. Substrate contacts are provided by N287 and R382.

Belongs to the class-I pyridoxal-phosphate-dependent aminotransferase family. LL-diaminopimelate aminotransferase subfamily. In terms of assembly, homodimer. Requires pyridoxal 5'-phosphate as cofactor.

It catalyses the reaction (2S,6S)-2,6-diaminopimelate + 2-oxoglutarate = (S)-2,3,4,5-tetrahydrodipicolinate + L-glutamate + H2O + H(+). It functions in the pathway amino-acid biosynthesis; L-lysine biosynthesis via DAP pathway; LL-2,6-diaminopimelate from (S)-tetrahydrodipicolinate (aminotransferase route): step 1/1. Involved in the synthesis of meso-diaminopimelate (m-DAP or DL-DAP), required for both lysine and peptidoglycan biosynthesis. Catalyzes the direct conversion of tetrahydrodipicolinate to LL-diaminopimelate. Is also able to use meso-diaminopimelate, lysine or ornithine as substrates. The sequence is that of LL-diaminopimelate aminotransferase from Protochlamydia amoebophila (strain UWE25).